The primary structure comprises 245 residues: U21-ctenitoxin-Pn1a (245 aa).

One can recognise a Peptidase S1 domain in the interval 1–245 (IVYGTVTTPG…FRSWMDKVMT (245 aa)). Cysteines 30 and 46 form a disulfide. Catalysis depends on charge relay system residues histidine 45 and aspartate 95. 2 disulfides stabilise this stretch: cysteine 161–cysteine 183 and cysteine 192–cysteine 221. The active-site Charge relay system is serine 196.

Expressed by the venom gland.

The protein localises to the secreted. In terms of biological role, protease. Hydrolyzes gelatin and succinyl casein. This is U21-ctenitoxin-Pn1a from Phoneutria nigriventer (Brazilian armed spider).